The sequence spans 752 residues: Two pore channel protein 2 (752 aa).

Residues methionine 1 to arginine 84 lie on the Cytoplasmic side of the membrane. A helical transmembrane segment spans residues threonine 85–leucine 105. Residues threonine 106 to serine 127 are Extracellular-facing. Residues valine 128–glycine 148 traverse the membrane as a helical segment. The Cytoplasmic portion of the chain corresponds to tryptophan 149–asparagine 155. The chain crosses the membrane as a helical span at residues leucine 156–leucine 176. Residues serine 177 to proline 183 lie on the Extracellular side of the membrane. A helical transmembrane segment spans residues leucine 184–lysine 204. The interaction with phosphatidylinositol 3,5-bisphosphate stretch occupies residues lysine 203–lysine 207. The Cytoplasmic portion of the chain corresponds to threonine 205–serine 218. Residues valine 219 to alanine 239 traverse the membrane as a helical segment. The Extracellular portion of the chain corresponds to glycine 240 to tyrosine 254. The helical; Pore-forming intramembrane region spans phenylalanine 255–isoleucine 279. Residues proline 280–alanine 289 are Extracellular-facing. The helical transmembrane segment at isoleucine 290 to isoleucine 310 threads the bilayer. The Cytoplasmic portion of the chain corresponds to isoleucine 311–tyrosine 436. The helical transmembrane segment at leucine 437–valine 459 threads the bilayer. Over leucine 460–aspartate 465 the chain is Extracellular. The helical transmembrane segment at aspartate 466 to leucine 486 threads the bilayer. Topologically, residues lysine 487–asparagine 502 are cytoplasmic. Residues valine 503–tyrosine 523 traverse the membrane as a helical segment. Residues arginine 524 to arginine 554 lie on the Extracellular side of the membrane. A helical membrane pass occupies residues phenylalanine 555–leucine 575. The Cytoplasmic segment spans residues valine 576–arginine 580. The chain crosses the membrane as a helical span at residues alanine 581 to phenylalanine 601. The Extracellular segment spans residues arginine 602–asparagine 635. 2 N-linked (GlcNAc...) asparagine glycosylation sites follow: asparagine 611 and asparagine 618. Positions phenylalanine 636–phenylalanine 658 form an intramembrane region, helical; Pore-forming. Residues leucine 659–tyrosine 673 lie on the Extracellular side of the membrane. The chain crosses the membrane as a helical span at residues phenylalanine 674–leucine 694. At glutamate 695–arginine 752 the chain is on the cytoplasmic side.

It belongs to the calcium channel alpha-1 subunit (TC 1.A.1.11) family. Two pore calcium channel subfamily. In terms of assembly, homodimer. Interacts with LRRK2. Interacts with HAX1. Interacts with MTOR; the interaction is required for TPCN2 ATP sensitivity. Found in a complex with LSM12, TPCN1 and TPCN2. Interacts with LSM12. N-glycosylated. As to expression, widely expressed. Expressed at high level in liver and kidney.

Its subcellular location is the late endosome membrane. It is found in the lysosome membrane. It localises to the melanosome membrane. It catalyses the reaction Na(+)(in) = Na(+)(out). The enzyme catalyses Ca(2+)(in) = Ca(2+)(out). With respect to regulation, regulated by Mg(2+) ions, cytosolic Mg(2+) selectively inhibits outward current while lysosomal Mg(2+) modestly inhibits both the outward and inward currents. In the absence of Mg(2+), NAADP readily activates TPCN2, with properties similar to PI(3,5)P2. Na(+) current is inhibited by ATP in a MTORC-dependent manner. ATP sensitivity is independent of PI(3,5)P2. Both current elicited by PI(3,5)P2 as well as NAADP are inhibited by tetrandrine. Intracellular channel initially characterized as a non-selective Ca(2+)-permeable channel activated by NAADP (nicotinic acid adenine dinucleotide phosphate), it is also a highly-selective Na(+) channel activated directly by PI(3,5)P2 (phosphatidylinositol 3,5-bisphosphate). Localizes to the lysosomal and late endosome membranes where it regulates organellar membrane excitability, membrane trafficking, and pH homeostasis. Is associated with a plethora of physiological processes, including mTOR-dependent nutrient sensing, skin pigmentation and autophagy. Ion selectivity is not fixed but rather agonist-dependent and under defined ionic conditions, can be readily activated by both NAADP and PI(3,5)P2. As calcium channel, it increases the pH in the lysosomal lumen, as sodium channel, it promotes lysosomal exocytosis. Plays a crucial role in endolysosomal trafficking in the endolysosomal degradation pathway and is potentially involved in the homeostatic control of many macromolecules and cell metabolites. Also expressed in melanosomes of pigmented cells where mediates a Ca(2+) channel and/or PI(3,5)P2-activated melanosomal Na(+) channel to acidify pH and inhibit tyrosinase activity required for melanogenesis and pigmentation. Unlike the voltage-dependent TPCN1, TPCN2 is voltage independent and can be activated solely by PI(3,5)P2 binding. In contrast, PI(4,5)P2, PI(3,4)P2, PI(3)P and PI(5)P have no obvious effect on channel activation. Its function is as follows. (Microbial infection) During Ebola virus (EBOV) infection, controls the movement of endosomes containing virus particles and is required by EBOV to escape from the endosomal network into the cell cytoplasm. In terms of biological role, (Microbial infection) Required for cell entry of coronaviruses SARS-CoV and SARS-CoV-2, as well as human coronavirus EMC (HCoV-EMC), by endocytosis. This is Two pore channel protein 2 from Homo sapiens (Human).